We begin with the raw amino-acid sequence, 430 residues long: MGKNVVVLGTQWGDEGKGKIVDLLTEQVTHVARFQGGHNAGHTLVIDGKKTVLHLIPSGILHSGVTCFIGNGVVLAPDALMKEIHELEAQEVPVRERLKLSPACPLILPYHVALDQARELKRGEAKIGTTGRGIGPAYEDKVSRRGLRLGDLLHEERFATKLKEVMEYHNFALTQYYGAEAVDYQAVLDEALLLAKELRPMIVDVSDELHLAREAGKNILFEGAQGSLLDIDHGTYPFVTSSNTTAGGTATGSGFGPLYLDYVLGITKAYTTRVGAGPFPTELDCEVGEHLGVKGHEFGATTGRKRRTGWFDAVAVKHAVRINSMSGMCLTKLDVLDGLKEVKICVGYKNSAGEDVGIPCDAEGWEDIQPVYESLPGWSESTVGAKSVDALPQAARDYIARLEALVGITVDIISTGPDRVETIILKSPFA.

GTP contacts are provided by residues 13–19 (GDEGKGK) and 41–43 (GHT). The active-site Proton acceptor is Asp14. Mg(2+) contacts are provided by Asp14 and Gly41. IMP is bound by residues 14–17 (DEGK), 39–42 (NAGH), Thr130, Arg144, Gln225, Thr240, and Arg304. Catalysis depends on His42, which acts as the Proton donor. Position 300–306 (300–306 (ATTGRKR)) interacts with substrate. GTP-binding positions include Arg306, 332-334 (KLD), and 414-416 (STG).

This sequence belongs to the adenylosuccinate synthetase family. As to quaternary structure, homodimer. Mg(2+) is required as a cofactor.

The protein resides in the cytoplasm. The enzyme catalyses IMP + L-aspartate + GTP = N(6)-(1,2-dicarboxyethyl)-AMP + GDP + phosphate + 2 H(+). Its pathway is purine metabolism; AMP biosynthesis via de novo pathway; AMP from IMP: step 1/2. Plays an important role in the de novo pathway of purine nucleotide biosynthesis. Catalyzes the first committed step in the biosynthesis of AMP from IMP. The sequence is that of Adenylosuccinate synthetase from Teredinibacter turnerae (strain ATCC 39867 / T7901).